Consider the following 203-residue polypeptide: ATP synthase subunit b (203 aa).

Residues Phe14–Ser34 traverse the membrane as a helical segment.

This sequence belongs to the ATPase B chain family. F-type ATPases have 2 components, F(1) - the catalytic core - and F(0) - the membrane proton channel. F(1) has five subunits: alpha(3), beta(3), gamma(1), delta(1), epsilon(1). F(0) has three main subunits: a(1), b(2) and c(10-14). The alpha and beta chains form an alternating ring which encloses part of the gamma chain. F(1) is attached to F(0) by a central stalk formed by the gamma and epsilon chains, while a peripheral stalk is formed by the delta and b chains.

Its subcellular location is the cell inner membrane. Functionally, f(1)F(0) ATP synthase produces ATP from ADP in the presence of a proton or sodium gradient. F-type ATPases consist of two structural domains, F(1) containing the extramembraneous catalytic core and F(0) containing the membrane proton channel, linked together by a central stalk and a peripheral stalk. During catalysis, ATP synthesis in the catalytic domain of F(1) is coupled via a rotary mechanism of the central stalk subunits to proton translocation. In terms of biological role, component of the F(0) channel, it forms part of the peripheral stalk, linking F(1) to F(0). In Syntrophobacter fumaroxidans (strain DSM 10017 / MPOB), this protein is ATP synthase subunit b.